We begin with the raw amino-acid sequence, 258 residues long: Acyl-[acyl-carrier-protein]--UDP-N-acetylglucosamine O-acyltransferase (258 aa).

It belongs to the transferase hexapeptide repeat family. LpxA subfamily. In terms of assembly, homotrimer.

Its subcellular location is the cytoplasm. It catalyses the reaction a (3R)-hydroxyacyl-[ACP] + UDP-N-acetyl-alpha-D-glucosamine = a UDP-3-O-[(3R)-3-hydroxyacyl]-N-acetyl-alpha-D-glucosamine + holo-[ACP]. It functions in the pathway glycolipid biosynthesis; lipid IV(A) biosynthesis; lipid IV(A) from (3R)-3-hydroxytetradecanoyl-[acyl-carrier-protein] and UDP-N-acetyl-alpha-D-glucosamine: step 1/6. In terms of biological role, involved in the biosynthesis of lipid A, a phosphorylated glycolipid that anchors the lipopolysaccharide to the outer membrane of the cell. The protein is Acyl-[acyl-carrier-protein]--UDP-N-acetylglucosamine O-acyltransferase of Pseudomonas savastanoi pv. phaseolicola (strain 1448A / Race 6) (Pseudomonas syringae pv. phaseolicola (strain 1448A / Race 6)).